We begin with the raw amino-acid sequence, 428 residues long: Serine--tRNA ligase (428 aa).

235-237 (TAE) lines the L-serine pocket. 266–268 (RSE) is a binding site for ATP. L-serine is bound at residue E289. ATP is bound at residue 353 to 356 (EISS). An L-serine-binding site is contributed by S389.

It belongs to the class-II aminoacyl-tRNA synthetase family. Type-1 seryl-tRNA synthetase subfamily. Homodimer. The tRNA molecule binds across the dimer.

It is found in the cytoplasm. It catalyses the reaction tRNA(Ser) + L-serine + ATP = L-seryl-tRNA(Ser) + AMP + diphosphate + H(+). The enzyme catalyses tRNA(Sec) + L-serine + ATP = L-seryl-tRNA(Sec) + AMP + diphosphate + H(+). Its pathway is aminoacyl-tRNA biosynthesis; selenocysteinyl-tRNA(Sec) biosynthesis; L-seryl-tRNA(Sec) from L-serine and tRNA(Sec): step 1/1. In terms of biological role, catalyzes the attachment of serine to tRNA(Ser). Is also able to aminoacylate tRNA(Sec) with serine, to form the misacylated tRNA L-seryl-tRNA(Sec), which will be further converted into selenocysteinyl-tRNA(Sec). The chain is Serine--tRNA ligase from Shewanella sp. (strain W3-18-1).